A 1133-amino-acid polypeptide reads, in one-letter code: Roquin-1 (1133 aa).

Zn(2+) is bound by residues C14, C17, C33, H35, C38, C50, and D53. The RING-type; degenerate zinc-finger motif lies at 14-54 (CPICTQTFDETIRKPISLGCGHTVCKMCLNKLHRKACPFDQ). The tract at residues 89–173 (GVEDTKHYEE…RTVTELILQH (85 aa)) is HEPN-N. Residues 174-326 (QNPQQLSSNL…MQSIIDKLQT (153 aa)) form an ROQ region. An HEPN-C region spans residues 327-396 (PASFAQSVQE…VVHGLVDYIQ (70 aa)). The segment at 413–441 (KYKTYMCRDMKQRGGCPRGASCTFAHSQE) adopts a C3H1-type zinc-finger fold. S462, S531, S535, and S863 each carry phosphoserine. The tract at residues 505 to 542 (TQLIPRGTDPSYDSSLKPGKIDHLSSSAPGSPPDLLES) is disordered. Disordered regions lie at residues 1000–1019 (NTLA…WPGM), 1058–1078 (NTSK…PAED), and 1094–1133 (QENI…SSAP). Over residues 1007-1016 (QPPPPPPPKW) the composition is skewed to pro residues. Positions 1058–1070 (NTSKQAENGQPEP) are enriched in polar residues. A compositionally biased stretch (low complexity) spans 1096-1110 (NISLLSNKTSSLNLS). S1110 is modified (phosphoserine). The span at 1119–1133 (NNDSQRSGVTPSSAP) shows a compositional bias: polar residues.

As to quaternary structure, able to homodimerize. Interacts with DDX6 and EDC4. Interacts with CCR4-NOT deadenylase complex. Interacts with RC3H1; the interaction is RNA independent. Proteolytically cleaved after Arg-510 and Arg-579 by MALT1 in activated CD4(+) T cells; cleavage at Arg-510 and Arg-579 is critical for promoting RC3H1 degradation in response to T-cell receptor (TCR) stimulation, and hence is necessary for prolonging the stability of a set of mRNAs controlling Th17 cell differentiation. Widely expressed. Expressed at higher level in cerebellum, spleen, ovary and liver.

The protein localises to the cytoplasm. The protein resides in the P-body. It localises to the cytoplasmic granule. It carries out the reaction S-ubiquitinyl-[E2 ubiquitin-conjugating enzyme]-L-cysteine + [acceptor protein]-L-lysine = [E2 ubiquitin-conjugating enzyme]-L-cysteine + N(6)-ubiquitinyl-[acceptor protein]-L-lysine.. The protein operates within protein modification; protein ubiquitination. Its function is as follows. Post-transcriptional repressor of mRNAs containing a conserved stem loop motif, called constitutive decay element (CDE), which is often located in the 3'-UTR, as in HMGXB3, ICOS, IER3, NFKBID, NFKBIZ, PPP1R10, TNF, TNFRSF4 and in many more mRNAs. Cleaves translationally inactive mRNAs harboring a stem-loop (SL), often located in their 3'-UTRs, during the early phase of inflammation in a helicase UPF1-independent manner. Binds to CDE and promotes mRNA deadenylation and degradation. This process does not involve miRNAs. In follicular helper T (Tfh) cells, represses of ICOS and TNFRSF4 expression, thus preventing spontaneous Tfh cell differentiation, germinal center B-cell differentiation in the absence of immunization and autoimmunity. In resting or LPS-stimulated macrophages, controls inflammation by suppressing TNF expression. Also recognizes CDE in its own mRNA and in that of paralogous RC3H2, possibly leading to feedback loop regulation. Recognizes and binds mRNAs containing a hexaloop stem-loop motif, called alternative decay element (ADE). Together with ZC3H12A, destabilizes TNFRSF4/OX40 mRNA by binding to the conserved stem loop structure in its 3'UTR. Able to interact with double-stranded RNA (dsRNA). miRNA-binding protein that regulates microRNA homeostasis. Enhances DICER-mediated processing of pre-MIR146a but reduces mature MIR146a levels through an increase of 3' end uridylation. Both inhibits ICOS mRNA expression and they may act together to exert the suppression. Acts as a ubiquitin E3 ligase. Pairs with E2 enzymes UBE2A, UBE2B, UBE2D2, UBE2F, UBE2G1, UBE2G2 and UBE2L3 and produces polyubiquitin chains. Shows the strongest activity when paired with UBE2N:UBE2V1 or UBE2N:UBE2V2 E2 complexes and generate both short and long polyubiquitin chains. This chain is Roquin-1, found in Homo sapiens (Human).